Here is a 326-residue protein sequence, read N- to C-terminus: MYSNKPSRKPHTFQFRGKQLQASDSLFFIIALLCLLPIISSPVALILGFTLASFGFVPTKLNIAAATKKLLAYSIIGLGFGIHLDQAIAASTQGFGLIVGSIFFTLIFGWFLTKALRLDQKTGHLIASGTAICGGSAIAAVAPAINARDDQTSLALATVFVLNSIALFIFPAIGHLLEMSQHAFGTWAAIAIHDTSSVVGAAGAYGDEALRTATTIKLARALWIVPIAFLSALLFKGDNKKIGIPYFILFYCLAIVFAHFVPSLESIYSHIFVASKRLLVVCLFLIGSGITIQKLRAAGLKPLLLGVLLWVAIGVGSLSYILLNVA.

10 helical membrane passes run 27-49 (FFII…ILGF), 70-89 (LLAY…QAIA), 94-116 (GFGL…TKAL), 123-145 (GHLI…APAI), 155-177 (ALAT…GHLL), 184-206 (FGTW…GAYG), 216-235 (IKLA…ALLF), 242-261 (IGIP…AHFV), 271-290 (IFVA…GSGI), and 303-325 (LLLG…LLNV).

It belongs to the UPF0324 family.

It is found in the cell membrane. This is UPF0324 membrane protein PBPRB0970 from Photobacterium profundum (strain SS9).